Reading from the N-terminus, the 160-residue chain is Crossover junction endodeoxyribonuclease RuvC (160 aa).

Active-site residues include D9, E68, and D141. Mg(2+) is bound by residues D9, E68, and D141.

This sequence belongs to the RuvC family. In terms of assembly, homodimer which binds Holliday junction (HJ) DNA. The HJ becomes 2-fold symmetrical on binding to RuvC with unstacked arms; it has a different conformation from HJ DNA in complex with RuvA. In the full resolvosome a probable DNA-RuvA(4)-RuvB(12)-RuvC(2) complex forms which resolves the HJ. It depends on Mg(2+) as a cofactor.

It localises to the cytoplasm. The catalysed reaction is Endonucleolytic cleavage at a junction such as a reciprocal single-stranded crossover between two homologous DNA duplexes (Holliday junction).. Functionally, the RuvA-RuvB-RuvC complex processes Holliday junction (HJ) DNA during genetic recombination and DNA repair. Endonuclease that resolves HJ intermediates. Cleaves cruciform DNA by making single-stranded nicks across the HJ at symmetrical positions within the homologous arms, yielding a 5'-phosphate and a 3'-hydroxyl group; requires a central core of homology in the junction. The consensus cleavage sequence is 5'-(A/T)TT(C/G)-3'. Cleavage occurs on the 3'-side of the TT dinucleotide at the point of strand exchange. HJ branch migration catalyzed by RuvA-RuvB allows RuvC to scan DNA until it finds its consensus sequence, where it cleaves and resolves the cruciform DNA. The sequence is that of Crossover junction endodeoxyribonuclease RuvC from Campylobacter jejuni subsp. jejuni serotype O:2 (strain ATCC 700819 / NCTC 11168).